Reading from the N-terminus, the 172-residue chain is 3-hydroxydecanoyl-[acyl-carrier-protein] dehydratase (172 aa).

His71 is a catalytic residue.

It belongs to the thioester dehydratase family. FabA subfamily. Homodimer.

It localises to the cytoplasm. The enzyme catalyses a (3R)-hydroxyacyl-[ACP] = a (2E)-enoyl-[ACP] + H2O. It catalyses the reaction (3R)-hydroxydecanoyl-[ACP] = (2E)-decenoyl-[ACP] + H2O. It carries out the reaction (2E)-decenoyl-[ACP] = (3Z)-decenoyl-[ACP]. The protein operates within lipid metabolism; fatty acid biosynthesis. In terms of biological role, necessary for the introduction of cis unsaturation into fatty acids. Catalyzes the dehydration of (3R)-3-hydroxydecanoyl-ACP to E-(2)-decenoyl-ACP and then its isomerization to Z-(3)-decenoyl-ACP. Can catalyze the dehydratase reaction for beta-hydroxyacyl-ACPs with saturated chain lengths up to 16:0, being most active on intermediate chain length. This is 3-hydroxydecanoyl-[acyl-carrier-protein] dehydratase from Photorhabdus laumondii subsp. laumondii (strain DSM 15139 / CIP 105565 / TT01) (Photorhabdus luminescens subsp. laumondii).